Consider the following 134-residue polypeptide: Small ribosomal subunit protein uS11 (134 aa).

The segment covering 113 to 122 (SSITDATPQP) has biased composition (polar residues). Positions 113–134 (SSITDATPQPHNGCRPTKRRKV) are disordered.

It belongs to the universal ribosomal protein uS11 family. As to quaternary structure, part of the 30S ribosomal subunit. Interacts with proteins S7 and S18. Binds to IF-3.

Functionally, located on the platform of the 30S subunit, it bridges several disparate RNA helices of the 16S rRNA. Forms part of the Shine-Dalgarno cleft in the 70S ribosome. The sequence is that of Small ribosomal subunit protein uS11 from Corynebacterium aurimucosum (strain ATCC 700975 / DSM 44827 / CIP 107346 / CN-1) (Corynebacterium nigricans).